The sequence spans 115 residues: Thrombospondin type-1 domain-containing protein 8 (115 aa).

The N-terminal stretch at 1 to 21 is a signal peptide; that stretch reads MARTPGALLLAPLLLLQLATP. Residues 53–104 form the TSP type-1 domain; sequence DSILGPWGKWRCLCDLGKQERSREVVGTAPGPVFMDPEKLIQLRPCRQRDCP.

The chain is Thrombospondin type-1 domain-containing protein 8 from Homo sapiens (Human).